We begin with the raw amino-acid sequence, 240 residues long: L-isoleucine-4-hydroxylase (240 aa).

The Fe cation site is built by His-159, Asp-161, and His-212.

The protein belongs to the iron/ascorbate-dependent oxidoreductase family. L-ascorbate serves as cofactor. Requires Fe(2+) as cofactor.

It carries out the reaction L-isoleucine + 2-oxoglutarate + O2 = (4S)-4-hydroxy-L-isoleucine + succinate + CO2. Its function is as follows. Catalyzes the hydroxylation of L-isoleucine to produce (4S)-4-hydroxy-L-isoleucine. Can also catalyze the hydroxylation of L-leucine, L-norvaline, L-norleucine and L-allo-isoleucine, as well as the sulfoxidation of L-methionine, L-ethionine, S-methyl-L-cysteine, S-ethyl-L-cysteine, and S-allyl-L-cysteine. The protein is L-isoleucine-4-hydroxylase of Bacillus thuringiensis.